The primary structure comprises 636 residues: 1-deoxy-D-xylulose-5-phosphate synthase (636 aa).

Residues histidine 74 and 115–117 (AHS) each bind thiamine diphosphate. Position 146 (aspartate 146) interacts with Mg(2+). Thiamine diphosphate contacts are provided by residues 147-148 (GS), asparagine 176, tyrosine 287, and glutamate 369. Residue asparagine 176 participates in Mg(2+) binding.

The protein belongs to the transketolase family. DXPS subfamily. Homodimer. Requires Mg(2+) as cofactor. It depends on thiamine diphosphate as a cofactor.

It catalyses the reaction D-glyceraldehyde 3-phosphate + pyruvate + H(+) = 1-deoxy-D-xylulose 5-phosphate + CO2. The protein operates within metabolic intermediate biosynthesis; 1-deoxy-D-xylulose 5-phosphate biosynthesis; 1-deoxy-D-xylulose 5-phosphate from D-glyceraldehyde 3-phosphate and pyruvate: step 1/1. In terms of biological role, catalyzes the acyloin condensation reaction between C atoms 2 and 3 of pyruvate and glyceraldehyde 3-phosphate to yield 1-deoxy-D-xylulose-5-phosphate (DXP). In Polaromonas naphthalenivorans (strain CJ2), this protein is 1-deoxy-D-xylulose-5-phosphate synthase.